Here is a 35-residue protein sequence, read N- to C-terminus: Photosystem II reaction center protein T (35 aa).

A helical membrane pass occupies residues 3–23; that stretch reads ALVYTFLLXSTLGIIFFAIFF.

It belongs to the PsbT family. PSII is composed of 1 copy each of membrane proteins PsbA, PsbB, PsbC, PsbD, PsbE, PsbF, PsbH, PsbI, PsbJ, PsbK, PsbL, PsbM, PsbT, PsbY, PsbZ, Psb30/Ycf12, at least 3 peripheral proteins of the oxygen-evolving complex and a large number of cofactors. It forms dimeric complexes.

The protein localises to the plastid. It is found in the chloroplast thylakoid membrane. Functionally, found at the monomer-monomer interface of the photosystem II (PS II) dimer, plays a role in assembly and dimerization of PSII. PSII is a light-driven water plastoquinone oxidoreductase, using light energy to abstract electrons from H(2)O, generating a proton gradient subsequently used for ATP formation. This is Photosystem II reaction center protein T from Cunninghamia lanceolata (China fir).